The chain runs to 550 residues: Methionine--tRNA ligase (550 aa).

Positions proline 13–histidine 23 match the 'HIGH' region motif. Cysteine 145, cysteine 148, cysteine 158, and cysteine 161 together coordinate Zn(2+). Positions glutamine 331 to serine 335 match the 'KMSKS' region motif. Lysine 334 lines the ATP pocket.

The protein belongs to the class-I aminoacyl-tRNA synthetase family. MetG type 1 subfamily. In terms of assembly, monomer. The cofactor is Zn(2+).

The protein localises to the cytoplasm. The catalysed reaction is tRNA(Met) + L-methionine + ATP = L-methionyl-tRNA(Met) + AMP + diphosphate. Is required not only for elongation of protein synthesis but also for the initiation of all mRNA translation through initiator tRNA(fMet) aminoacylation. The protein is Methionine--tRNA ligase (metG) of Chlamydia muridarum (strain MoPn / Nigg).